A 51-amino-acid chain; its full sequence is Large ribosomal subunit protein eL39 (51 aa).

Belongs to the eukaryotic ribosomal protein eL39 family.

This chain is Large ribosomal subunit protein eL39 (rpl39e), found in Pyrobaculum aerophilum (strain ATCC 51768 / DSM 7523 / JCM 9630 / CIP 104966 / NBRC 100827 / IM2).